A 90-amino-acid chain; its full sequence is MKTAIFTVVLALAVFAVLSFGWEANEKALSEEFTELIHEKEAASETEARECRYFWGECHDHMPCCDWLVCGYKWPITYNICVWNRTFPEK.

The first 19 residues, 1 to 19 (MKTAIFTVVLALAVFAVLS), serve as a signal peptide directing secretion. Residues 20-50 (FGWEANEKALSEEFTELIHEKEAASETEARE) constitute a propeptide that is removed on maturation. 3 disulfides stabilise this stretch: cysteine 51–cysteine 65, cysteine 58–cysteine 70, and cysteine 64–cysteine 81.

This sequence belongs to the neurotoxin 10 (Hwtx-1) family. 13 (Hntx-13) subfamily. In terms of tissue distribution, expressed by the venom gland.

The protein localises to the secreted. In terms of biological role, ion channel inhibitor. The sequence is that of U7-theraphotoxin-Hhn1i from Cyriopagopus hainanus (Chinese bird spider).